The sequence spans 155 residues: Telokin-like protein 20 homolog (155 aa).

A disordered region spans residues 109–155; it reads KRAVAPPHHEPEPVPAEEGAVADRAEPESGDAPPSPKKQKLDEREQD.

In Orgyia pseudotsugata multicapsid polyhedrosis virus (OpMNPV), this protein is Telokin-like protein 20 homolog.